The following is a 137-amino-acid chain: Large ribosomal subunit protein bL17 (137 aa).

This sequence belongs to the bacterial ribosomal protein bL17 family. As to quaternary structure, part of the 50S ribosomal subunit. Contacts protein L32.

The chain is Large ribosomal subunit protein bL17 from Caulobacter vibrioides (strain ATCC 19089 / CIP 103742 / CB 15) (Caulobacter crescentus).